Reading from the N-terminus, the 231-residue chain is Lytic polysaccharide monooxygenase-like protein X325 (231 aa).

Residues 1 to 17 form the signal peptide; the sequence is MRLSLLVTLALTALIEA. His-18 lines the Cu(2+) pocket. Residues Asn-34, Asn-55, Asn-98, Asn-133, Asn-174, and Asn-180 are each glycosylated (N-linked (GlcNAc...) asparagine). 2 cysteine pairs are disulfide-bonded: Cys-47/Cys-157 and Cys-122/Cys-178. The GPI-anchor amidated isoleucine moiety is linked to residue Ile-202. A propeptide spans 203–231 (removed in mature form); it reads ASTTTGSAPRYYSWAGWLPLVAGAIWMAL.

The protein belongs to the X325 family. Cu(2+) is required as a cofactor.

The protein resides in the cell membrane. Functionally, lytic polysaccharide monooxygenase-like protein that has diverged to biological functions other than polysaccharide degradation since it does not perform oxidative cleavage of polysaccharides. Acts as a cell surface-bound protein that functions in the copper-accumulation pathway. May also act as the major cell wall sensor that regulates MAP kinase-dependent hyphal anastomosis, the fusion of hyphal cells. This chain is Lytic polysaccharide monooxygenase-like protein X325, found in Hypocrea jecorina (strain QM6a) (Trichoderma reesei).